The sequence spans 245 residues: tRNA (guanine-N(1)-)-methyltransferase (245 aa).

S-adenosyl-L-methionine is bound by residues Gly-111 and 130–135 (IGDYVL).

This sequence belongs to the RNA methyltransferase TrmD family. In terms of assembly, homodimer.

Its subcellular location is the cytoplasm. It carries out the reaction guanosine(37) in tRNA + S-adenosyl-L-methionine = N(1)-methylguanosine(37) in tRNA + S-adenosyl-L-homocysteine + H(+). In terms of biological role, specifically methylates guanosine-37 in various tRNAs. The sequence is that of tRNA (guanine-N(1)-)-methyltransferase from Dictyoglomus turgidum (strain DSM 6724 / Z-1310).